We begin with the raw amino-acid sequence, 504 residues long: Cytochrome P450 4A2 (504 aa).

Residues 1–4 (MGFS) constitute a propeptide that is removed on maturation. Glu315 contacts heme. Ser434 is subject to Phosphoserine. Cys451 is a binding site for heme.

The protein belongs to the cytochrome P450 family. Heme is required as a cofactor.

The protein localises to the endoplasmic reticulum membrane. It localises to the microsome membrane. The enzyme catalyses an omega-methyl-long-chain fatty acid + reduced [NADPH--hemoprotein reductase] + O2 = an omega-hydroxy-long-chain fatty acid + oxidized [NADPH--hemoprotein reductase] + H2O + H(+). It catalyses the reaction dodecanoate + reduced [NADPH--hemoprotein reductase] + O2 = (11R)-hydroxydodecanoate + oxidized [NADPH--hemoprotein reductase] + H2O + H(+). The catalysed reaction is dodecanoate + reduced [NADPH--hemoprotein reductase] + O2 = 12-hydroxydodecanoate + oxidized [NADPH--hemoprotein reductase] + H2O + H(+). It carries out the reaction tetradecanoate + reduced [NADPH--hemoprotein reductase] + O2 = 14-hydroxytetradecanoate + oxidized [NADPH--hemoprotein reductase] + H2O + H(+). The enzyme catalyses hexadecanoate + reduced [NADPH--hemoprotein reductase] + O2 = 16-hydroxyhexadecanoate + oxidized [NADPH--hemoprotein reductase] + H2O + H(+). The protein operates within lipid metabolism; fatty acid metabolism. Functionally, a cytochrome P450 monooxygenase that catalyzes omega and omega-1 hydroxylation of saturated fatty acids. Exhibits preferential omega versus omega-1 regioselectivity and (R) versus (S) stereoselectivity for hydroxylation of lauric and myristic acids. Has low activity toward palmitic acid. Mechanistically, uses molecular oxygen inserting one oxygen atom into a substrate, and reducing the second into a water molecule, with two electrons provided by NADPH via cytochrome P450 reductase (CPR; NADPH-ferrihemoprotein reductase). The polypeptide is Cytochrome P450 4A2 (Rattus norvegicus (Rat)).